The following is a 237-amino-acid chain: tRNA (guanine-N(1)-)-methyltransferase (237 aa).

S-adenosyl-L-methionine contacts are provided by residues Gly115 and 134–139; that span reads LGDFVL.

It belongs to the RNA methyltransferase TrmD family. Homodimer.

Its subcellular location is the cytoplasm. It catalyses the reaction guanosine(37) in tRNA + S-adenosyl-L-methionine = N(1)-methylguanosine(37) in tRNA + S-adenosyl-L-homocysteine + H(+). Specifically methylates guanosine-37 in various tRNAs. The protein is tRNA (guanine-N(1)-)-methyltransferase of Synechococcus sp. (strain RCC307).